Here is a 168-residue protein sequence, read N- to C-terminus: Endoribonuclease YbeY (168 aa).

Residues H122, H126, and H132 each coordinate Zn(2+).

This sequence belongs to the endoribonuclease YbeY family. Zn(2+) serves as cofactor.

It is found in the cytoplasm. Single strand-specific metallo-endoribonuclease involved in late-stage 70S ribosome quality control and in maturation of the 3' terminus of the 16S rRNA. This Brucella abortus (strain 2308) protein is Endoribonuclease YbeY.